The sequence spans 68 residues: Antimicrobial peptide Eval655 (68 aa).

The N-terminal stretch at 1–23 (MKTQFVVLLVALVLLQMFAQSEA) is a signal peptide. Leucine amide is present on Leu-36. The propeptide occupies 37–68 (GKRGLKNLDDFDDIFDDDLSSADLEFLKQLMR).

This sequence belongs to the non-disulfide-bridged peptide (NDBP) superfamily. Short antimicrobial peptide (group 4) family. In terms of tissue distribution, expressed by the venom gland.

It is found in the secreted. Probable antimicrobial peptide. Shows low inhibitory activity against herpes simplex virus type 1 (HSV-1). The sequence is that of Antimicrobial peptide Eval655 from Euscorpiops validus (Scorpion).